The sequence spans 438 residues: GTPase Der (438 aa).

2 EngA-type G domains span residues P4–G168 and I177–S352. GTP is bound by residues G10–S17, D57–I61, N120–D123, G183–S190, D230–L234, and N295–D298. The KH-like domain occupies K353–K437.

The protein belongs to the TRAFAC class TrmE-Era-EngA-EngB-Septin-like GTPase superfamily. EngA (Der) GTPase family. In terms of assembly, associates with the 50S ribosomal subunit.

GTPase that plays an essential role in the late steps of ribosome biogenesis. The chain is GTPase Der from Clostridium acetobutylicum (strain ATCC 824 / DSM 792 / JCM 1419 / IAM 19013 / LMG 5710 / NBRC 13948 / NRRL B-527 / VKM B-1787 / 2291 / W).